A 146-amino-acid chain; its full sequence is Large ribosomal subunit protein uL15 (146 aa).

Basic and acidic residues predominate over residues 1-13; the sequence is MKLHELKPAEGSR. The disordered stretch occupies residues 1–47; the sequence is MKLHELKPAEGSRKSRKRIGRGTGSGLGRNAGKGEKGQKARAGGGVR. The span at 21–31 shows a compositional bias: gly residues; that stretch reads RGTGSGLGRNA.

It belongs to the universal ribosomal protein uL15 family. In terms of assembly, part of the 50S ribosomal subunit.

Functionally, binds to the 23S rRNA. The polypeptide is Large ribosomal subunit protein uL15 (Clostridium kluyveri (strain NBRC 12016)).